A 485-amino-acid polypeptide reads, in one-letter code: D-alanine--D-alanyl carrier protein ligase (485 aa).

Position 144–145 (144–145 (TS)) interacts with ATP. Residue aspartate 189 participates in D-alanine binding. 284 to 289 (NTYGPT) is a binding site for ATP. Valine 293 is a D-alanine binding site. ATP is bound by residues aspartate 365 and lysine 473. Lysine 473 is a binding site for D-alanine.

This sequence belongs to the ATP-dependent AMP-binding enzyme family. DltA subfamily.

The protein localises to the cytoplasm. The catalysed reaction is holo-[D-alanyl-carrier protein] + D-alanine + ATP = D-alanyl-[D-alanyl-carrier protein] + AMP + diphosphate. It functions in the pathway cell wall biogenesis; lipoteichoic acid biosynthesis. Catalyzes the first step in the D-alanylation of lipoteichoic acid (LTA), the activation of D-alanine and its transfer onto the D-alanyl carrier protein (Dcp) DltC. In an ATP-dependent two-step reaction, forms a high energy D-alanyl-AMP intermediate, followed by transfer of the D-alanyl residue as a thiol ester to the phosphopantheinyl prosthetic group of the Dcp. D-alanylation of LTA plays an important role in modulating the properties of the cell wall in Gram-positive bacteria, influencing the net charge of the cell wall. The chain is D-alanine--D-alanyl carrier protein ligase from Staphylococcus haemolyticus (strain JCSC1435).